The chain runs to 79 residues: uncharacterized protein (79 aa).

The N-terminal stretch at 1–20 (MSQLMGIITRLQSLQETAEA) is a signal peptide.

This is an uncharacterized protein from Bacillus subtilis (strain 168).